The following is a 67-amino-acid chain: Stomoxyn (67 aa).

An N-terminal signal peptide occupies residues M1 to A24. The residue at position 66 (T66) is a Threonine amide.

In terms of tissue distribution, constitutively expressed in the adult anterior midgut; proventriculus, thoracic and reservoir regions.

It localises to the secreted. Its function is as follows. Has antimicrobial activity against most Gram-positive and Gram-negative bacteria, filamentous fungi and yeasts tested. Has trypanolytic effect on T.b.rhodesiense and limited hemolytic activity against bovine red blood cells. Functionally, may play an important role in protecting the stored blood in the anterior midgut from microorganisms prior to digestion. Adopts an amphipathic alpha-helical structure only in the presence of an organic solvent that mimics a phospholipid membrane. This Stomoxys calcitrans (Stable fly) protein is Stomoxyn.